The primary structure comprises 130 residues: Small ribosomal subunit protein uS11c (130 aa).

Belongs to the universal ribosomal protein uS11 family. In terms of assembly, part of the 30S ribosomal subunit.

It is found in the plastid. The protein resides in the chloroplast. This is Small ribosomal subunit protein uS11c from Marsilea quadrifolia (European water clover).